A 394-amino-acid chain; its full sequence is Tryptophan synthase beta chain (394 aa).

Position 90 is an N6-(pyridoxal phosphate)lysine (K90).

The protein belongs to the TrpB family. Tetramer of two alpha and two beta chains. Requires pyridoxal 5'-phosphate as cofactor.

The catalysed reaction is (1S,2R)-1-C-(indol-3-yl)glycerol 3-phosphate + L-serine = D-glyceraldehyde 3-phosphate + L-tryptophan + H2O. Its pathway is amino-acid biosynthesis; L-tryptophan biosynthesis; L-tryptophan from chorismate: step 5/5. Functionally, the beta subunit is responsible for the synthesis of L-tryptophan from indole and L-serine. The polypeptide is Tryptophan synthase beta chain (Bacteroides thetaiotaomicron (strain ATCC 29148 / DSM 2079 / JCM 5827 / CCUG 10774 / NCTC 10582 / VPI-5482 / E50)).